A 322-amino-acid polypeptide reads, in one-letter code: MASHEIQKVWADGCFDMFHYGHANALRQSKALGDYLIAGVHSSLSINQEKGLPVMEDEERYEVVEGCRYVDEVVRDAPFVTQTSMIKEYGVSIVAHGNDIVLDSSGQDSYCQVRRMGIFREVERTFGISTTEIVGRMMLKNRGSWLDGENGESSKDSGYHDRLLSLFMSSMGREKRGKVVFMDGNFDLFHAGHVASLRIARGMGDYLIVGIHDDETTKEYTRSYPVLSTKERMLTLMACRYVDEIVVSPYLVGSEFIKRHGIDVVAPSFDSKDLSRYDGIKDVVEHSYAENRFNYLSAEHIVNRIISNYQDYANRQKKRTGK.

The protein belongs to the cytidylyltransferase family.

It catalyses the reaction phosphoethanolamine + CTP + H(+) = CDP-ethanolamine + diphosphate. It participates in phospholipid metabolism; phosphatidylethanolamine biosynthesis; phosphatidylethanolamine from ethanolamine: step 2/3. The polypeptide is Probable ethanolamine-phosphate cytidylyltransferase (MUQ1) (Encephalitozoon cuniculi (strain GB-M1) (Microsporidian parasite)).